Consider the following 251-residue polypeptide: Triosephosphate isomerase (251 aa).

9–11 (NWK) contacts substrate. The active-site Electrophile is the His-96. Glu-166 serves as the catalytic Proton acceptor. Residues Gly-172, Ser-212, and 233–234 (GG) each bind substrate.

It belongs to the triosephosphate isomerase family. In terms of assembly, homodimer.

The protein resides in the cytoplasm. It catalyses the reaction D-glyceraldehyde 3-phosphate = dihydroxyacetone phosphate. It participates in carbohydrate biosynthesis; gluconeogenesis. It functions in the pathway carbohydrate degradation; glycolysis; D-glyceraldehyde 3-phosphate from glycerone phosphate: step 1/1. Its function is as follows. Involved in the gluconeogenesis. Catalyzes stereospecifically the conversion of dihydroxyacetone phosphate (DHAP) to D-glyceraldehyde-3-phosphate (G3P). This is Triosephosphate isomerase from Pelodictyon phaeoclathratiforme (strain DSM 5477 / BU-1).